A 400-amino-acid chain; its full sequence is Mannitol-1-phosphate 5-dehydrogenase (400 aa).

NAD(+) is bound at residue alanine 12–glycine 23. Residue lysine 221 is part of the active site.

It belongs to the mannitol dehydrogenase family. As to quaternary structure, monomer.

The enzyme catalyses D-mannitol 1-phosphate + NAD(+) = beta-D-fructose 6-phosphate + NADH + H(+). Its function is as follows. Catalyzes the NAD(H)-dependent interconversion of D-fructose 6-phosphate and D-mannitol 1-phosphate in the mannitol metabolic pathway. The polypeptide is Mannitol-1-phosphate 5-dehydrogenase (Pyricularia oryzae (strain Y34) (Rice blast fungus)).